Reading from the N-terminus, the 354-residue chain is Biotin synthase (354 aa).

One can recognise a Radical SAM core domain in the interval 64 to 282 (GDVELATLLS…IAVARITMPR (219 aa)). Residues Cys79, Cys83, and Cys86 each contribute to the [4Fe-4S] cluster site. Residues Cys123, Cys154, Cys214, and Arg286 each coordinate [2Fe-2S] cluster.

This sequence belongs to the radical SAM superfamily. Biotin synthase family. Homodimer. The cofactor is [4Fe-4S] cluster. Requires [2Fe-2S] cluster as cofactor.

It catalyses the reaction (4R,5S)-dethiobiotin + (sulfur carrier)-SH + 2 reduced [2Fe-2S]-[ferredoxin] + 2 S-adenosyl-L-methionine = (sulfur carrier)-H + biotin + 2 5'-deoxyadenosine + 2 L-methionine + 2 oxidized [2Fe-2S]-[ferredoxin]. It participates in cofactor biosynthesis; biotin biosynthesis; biotin from 7,8-diaminononanoate: step 2/2. Its function is as follows. Catalyzes the conversion of dethiobiotin (DTB) to biotin by the insertion of a sulfur atom into dethiobiotin via a radical-based mechanism. The chain is Biotin synthase from Paracidovorax citrulli (strain AAC00-1) (Acidovorax citrulli).